We begin with the raw amino-acid sequence, 176 residues long: NAD(P)H-quinone oxidoreductase subunit 6, chloroplastic (176 aa).

Transmembrane regions (helical) follow at residues 10–30 (FLLV…ILFT), 33–53 (IFSA…YIIA), 61–81 (AQLL…VMFI), 92–112 (LFTL…FLLI), and 152–172 (FFPP…GAIA).

The protein belongs to the complex I subunit 6 family. As to quaternary structure, NDH is composed of at least 16 different subunits, 5 of which are encoded in the nucleus.

Its subcellular location is the plastid. It localises to the chloroplast thylakoid membrane. The catalysed reaction is a plastoquinone + NADH + (n+1) H(+)(in) = a plastoquinol + NAD(+) + n H(+)(out). It carries out the reaction a plastoquinone + NADPH + (n+1) H(+)(in) = a plastoquinol + NADP(+) + n H(+)(out). In terms of biological role, NDH shuttles electrons from NAD(P)H:plastoquinone, via FMN and iron-sulfur (Fe-S) centers, to quinones in the photosynthetic chain and possibly in a chloroplast respiratory chain. The immediate electron acceptor for the enzyme in this species is believed to be plastoquinone. Couples the redox reaction to proton translocation, and thus conserves the redox energy in a proton gradient. The protein is NAD(P)H-quinone oxidoreductase subunit 6, chloroplastic (ndhG) of Fagopyrum esculentum subsp. ancestrale (Wild buckwheat).